The chain runs to 353 residues: DNA integrity scanning protein DisA (353 aa).

The region spanning 6-144 (DKELMNILKI…GGIKYVLRDS (139 aa)) is the DAC domain. Residues Gly73, Leu91, and 104 to 108 (TRHRT) each bind ATP.

This sequence belongs to the DisA family. Homooctamer. The cofactor is Mg(2+).

It catalyses the reaction 2 ATP = 3',3'-c-di-AMP + 2 diphosphate. Its function is as follows. Participates in a DNA-damage check-point that is active prior to asymmetric division when DNA is damaged. DisA forms globular foci that rapidly scan along the chromosomes during sporulation, searching for lesions. When a lesion is present, DisA pauses at the lesion site. This triggers a cellular response that culminates in a temporary block in sporulation initiation. In terms of biological role, also has diadenylate cyclase activity, catalyzing the condensation of 2 ATP molecules into cyclic di-AMP (c-di-AMP). c-di-AMP acts as a signaling molecule that couples DNA integrity with progression of sporulation. The rise in c-di-AMP level generated by DisA while scanning the chromosome, operates as a positive signal that advances sporulation; upon encountering a lesion, the DisA focus arrests at the damaged site and halts c-di-AMP synthesis. This chain is DNA integrity scanning protein DisA, found in Clostridium botulinum (strain 657 / Type Ba4).